The following is a 244-amino-acid chain: Uridylate kinase (244 aa).

11–14 is an ATP binding site; sequence KLSG. An involved in allosteric activation by GTP region spans residues 19–24; the sequence is GSLGYG. Residue Gly53 participates in UMP binding. 2 residues coordinate ATP: Gly54 and Arg58. UMP-binding positions include Asp73 and 134–141; that span reads SGNPFFTT. ATP is bound by residues Thr161, Tyr167, and Asp170.

Belongs to the UMP kinase family. In terms of assembly, homohexamer.

It is found in the cytoplasm. It catalyses the reaction UMP + ATP = UDP + ADP. Its pathway is pyrimidine metabolism; CTP biosynthesis via de novo pathway; UDP from UMP (UMPK route): step 1/1. Its activity is regulated as follows. Allosterically activated by GTP. Inhibited by UTP. Catalyzes the reversible phosphorylation of UMP to UDP. The polypeptide is Uridylate kinase (Trichodesmium erythraeum (strain IMS101)).